The primary structure comprises 135 residues: Snaclec echicetin subunit alpha (135 aa).

The signal sequence occupies residues 1-4 (GADE). Intrachain disulfides connect cysteine 6–cysteine 17, cysteine 34–cysteine 129, and cysteine 104–cysteine 121. In terms of domain architecture, C-type lectin spans 13 to 130 (NGVYCYMLFK…CENTFPFMCK (118 aa)).

It belongs to the snaclec family. Heterodimer of subunits alpha and beta; disulfide-linked. Expressed by the venom gland.

It localises to the secreted. Its function is as follows. Binding of echicetin to GPIbalpha (GP1BA) receptor on platelets alone results in inhibition of platelet aggregation, while binding to both GP1BA receptor and IgMk promotes platelet aggregation and signal transduction. The polypeptide is Snaclec echicetin subunit alpha (Echis carinatus (Saw-scaled viper)).